A 353-amino-acid polypeptide reads, in one-letter code: rRNA methyltransferase 1, mitochondrial (353 aa).

Residues 1-20 (MALLSTVRGATWGRLVTRHF) constitute a mitochondrion transit peptide. The segment at 311 to 353 (PTEGERRQLLQDPQEPSARSEGLSMAQHPGLSSGPEKERQNEG) is disordered.

The protein belongs to the class IV-like SAM-binding methyltransferase superfamily. RNA methyltransferase TrmH family.

Its subcellular location is the mitochondrion matrix. It catalyses the reaction guanosine(1145) in 16S rRNA + S-adenosyl-L-methionine = 2'-O-methylguanosine(1145) in 16S rRNA + S-adenosyl-L-homocysteine + H(+). In terms of biological role, S-adenosyl-L-methionine-dependent 2'-O-ribose methyltransferase that catalyzes the formation of 2'-O-methylguanosine at position 1145 (Gm1145) in the 16S mitochondrial large subunit ribosomal RNA (mtLSU rRNA), a universally conserved modification in the peptidyl transferase domain of the mtLSU rRNA. The sequence is that of rRNA methyltransferase 1, mitochondrial from Homo sapiens (Human).